Reading from the N-terminus, the 299-residue chain is Rhodanese-like/PpiC domain-containing protein 12, chloroplastic (299 aa).

The N-terminal 81 residues, 1-81, are a transit peptide targeting the chloroplast; it reads MFRVTGTLSA…SGFPALKMRA (81 aa). Serine 82 carries the N-acetylserine modification. Positions 93–183 constitute a PpiC domain; that stretch reads SREILVQHLL…FGLHLLQVLS (91 aa). In terms of domain architecture, Rhodanese spans 205–297; sequence FMDEAQLIDV…YSLKVDPSIP (93 aa). Residue cysteine 257 is the Cysteine persulfide intermediate of the active site.

Its subcellular location is the plastid. It is found in the chloroplast. This Arabidopsis thaliana (Mouse-ear cress) protein is Rhodanese-like/PpiC domain-containing protein 12, chloroplastic.